Here is a 201-residue protein sequence, read N- to C-terminus: FMN-dependent NADH:quinone oxidoreductase (201 aa).

FMN is bound by residues S10, 16 to 18 (SQS), 96 to 99 (MYNF), and 140 to 143 (SRGG).

The protein belongs to the azoreductase type 1 family. As to quaternary structure, homodimer. It depends on FMN as a cofactor.

It catalyses the reaction 2 a quinone + NADH + H(+) = 2 a 1,4-benzosemiquinone + NAD(+). The catalysed reaction is N,N-dimethyl-1,4-phenylenediamine + anthranilate + 2 NAD(+) = 2-(4-dimethylaminophenyl)diazenylbenzoate + 2 NADH + 2 H(+). Its function is as follows. Quinone reductase that provides resistance to thiol-specific stress caused by electrophilic quinones. Also exhibits azoreductase activity. Catalyzes the reductive cleavage of the azo bond in aromatic azo compounds to the corresponding amines. The sequence is that of FMN-dependent NADH:quinone oxidoreductase from Escherichia coli O157:H7.